The following is a 113-amino-acid chain: P antigen family member 3 (113 aa).

Over residues 1–12 (MSGHQRTRSRSR) the composition is skewed to basic residues. Disordered stretches follow at residues 1–61 (MSGH…EGAL) and 78–113 (SKTG…QPSV).

It belongs to the GAGE family.

This chain is P antigen family member 3 (PAGE3), found in Homo sapiens (Human).